The following is a 249-amino-acid chain: FMN reductase [NAD(P)H] (249 aa).

FMN is bound by residues 11 to 15 (HRSIR), Gln-67, 134 to 136 (PIG), and 173 to 175 (KPR).

This sequence belongs to the flavin oxidoreductase frp family. As to quaternary structure, homodimer.

The enzyme catalyses FMNH2 + NADP(+) = FMN + NADPH + 2 H(+). It catalyses the reaction FMNH2 + NAD(+) = FMN + NADH + 2 H(+). With respect to regulation, FMN is a competitive inhibitor of NADH, and therefore leads to the preferential utilization of NADPH. Functionally, reduces FMNH(2) to FMN, with NADH or NADPH as reductant. It also reduces nitroaromatic compounds, quinones, chromates and azo dyes. It could supply the reduced form of FMN to luciferase-like protein and contribute to the degradation of aromatic compounds. This chain is FMN reductase [NAD(P)H] (nfrA2), found in Bacillus subtilis (strain 168).